The primary structure comprises 180 residues: Acireductone dioxygenase (180 aa).

Fe(2+)-binding residues include H99, H101, E105, and H145. The Ni(2+) site is built by H99, H101, E105, and H145.

It belongs to the acireductone dioxygenase (ARD) family. Monomer. Fe(2+) is required as a cofactor. The cofactor is Ni(2+).

It catalyses the reaction 1,2-dihydroxy-5-(methylsulfanyl)pent-1-en-3-one + O2 = 3-(methylsulfanyl)propanoate + CO + formate + 2 H(+). The catalysed reaction is 1,2-dihydroxy-5-(methylsulfanyl)pent-1-en-3-one + O2 = 4-methylsulfanyl-2-oxobutanoate + formate + 2 H(+). Its pathway is amino-acid biosynthesis; L-methionine biosynthesis via salvage pathway; L-methionine from S-methyl-5-thio-alpha-D-ribose 1-phosphate: step 5/6. Catalyzes 2 different reactions between oxygen and the acireductone 1,2-dihydroxy-3-keto-5-methylthiopentene (DHK-MTPene) depending upon the metal bound in the active site. Fe-containing acireductone dioxygenase (Fe-ARD) produces formate and 2-keto-4-methylthiobutyrate (KMTB), the alpha-ketoacid precursor of methionine in the methionine recycle pathway. Ni-containing acireductone dioxygenase (Ni-ARD) produces methylthiopropionate, carbon monoxide and formate, and does not lie on the methionine recycle pathway. The protein is Acireductone dioxygenase of Geobacillus kaustophilus (strain HTA426).